Here is a 518-residue protein sequence, read N- to C-terminus: Cyclin-L2 (518 aa).

Cyclin-like stretches follow at residues 81-183 (ELIQ…RVLK) and 196-280 (KIIV…KILQ). The disordered stretch occupies residues 310-518 (AKGLLPGTAP…DHPGHSRHRR (209 aa)). Phosphoserine occurs at positions 328, 335, 345, 348, and 366. Residues 382–420 (RSREQSYSRSPSRSASPKRRKSDSGSTSGGSKSQSRSRS) form an RS region. The span at 405–427 (SGSTSGGSKSQSRSRSRSDSPPR) shows a compositional bias: low complexity. Residues 438–450 (SEVRGSRKSKDCK) are compositionally biased toward basic and acidic residues. Residues 455–469 (KPHKSRSRSSSRSRS) show a composition bias toward basic residues. Composition is skewed to basic and acidic residues over residues 470–479 (RSRERTDNSG) and 487–512 (YYRD…DHPG).

It belongs to the cyclin family. Cyclin L subfamily. Interacts with CDK11A, CDK11B, CDK12, CDK13 and POLR2A, the hyperphosphorylated C-terminal domain (CTD) of RNA polymerase II. May form a ternary complex with CDK11B and casein kinase II (CKII). Interacts with pre-mRNA-splicing factors, including at least SRSF1, SRSF2 and SRSF7/SLU7. In terms of tissue distribution, widely expressed (at protein level).

It is found in the nucleus speckle. Its subcellular location is the nucleus. The protein localises to the nucleoplasm. Involved in pre-mRNA splicing. May induce cell death, possibly by acting on the transcription and RNA processing of apoptosis-related factors. This Mus musculus (Mouse) protein is Cyclin-L2 (Ccnl2).